The chain runs to 451 residues: UDP-N-acetylmuramoylalanine--D-glutamate ligase (451 aa).

An ATP-binding site is contributed by 119–125; the sequence is GSNGKTT.

Belongs to the MurCDEF family.

The protein localises to the cytoplasm. The enzyme catalyses UDP-N-acetyl-alpha-D-muramoyl-L-alanine + D-glutamate + ATP = UDP-N-acetyl-alpha-D-muramoyl-L-alanyl-D-glutamate + ADP + phosphate + H(+). It participates in cell wall biogenesis; peptidoglycan biosynthesis. Cell wall formation. Catalyzes the addition of glutamate to the nucleotide precursor UDP-N-acetylmuramoyl-L-alanine (UMA). This chain is UDP-N-acetylmuramoylalanine--D-glutamate ligase, found in Streptococcus mutans serotype c (strain ATCC 700610 / UA159).